A 239-amino-acid polypeptide reads, in one-letter code: Serine protease SplF (239 aa).

Positions 1–36 (MNKNIIIKSIAALTILTSITGVGTTVVDGIQQTAKA) are cleaved as a signal peptide. Catalysis depends on charge relay system residues H75, D114, and S192.

The protein belongs to the peptidase S1B family.

The protein localises to the secreted. This is Serine protease SplF (splF) from Staphylococcus aureus (strain MSSA476).